The following is a 417-amino-acid chain: uncharacterized protein (417 aa).

2 disordered regions span residues 44–83 (FTNE…VRSR) and 325–346 (VQSA…PPKE). A compositionally biased stretch (low complexity) spans 54 to 64 (SNYSTSGYDSS). Over residues 65 to 76 (AETISANSSPIN) the composition is skewed to polar residues. The segment covering 326 to 339 (QSARKNQKKGRKNR) has biased composition (basic residues). Residues 362–382 (FLIIGVYVLVFIYVCTNVLTV) traverse the membrane as a helical segment.

The protein resides in the membrane. This is an uncharacterized protein from Caenorhabditis elegans.